Reading from the N-terminus, the 330-residue chain is MKKTFILQQQEISFVKNTFTQNLIEQLGIIEVQGPILSQVGNGMQDNLSGIEKAVQVNVKCIPNAVFEVVHSLAKWKRHTLARFNFKEDEGLFVHMKALRPDEDSLDSTHSVYVDQWDWEKVIPEGRRNFAYLKETVNSIYRAIRLTELAVEARFDIPSILPKQITFVHSEDLVKRYPDLSSKERENAICKEYGAVFLIGIGGKLSDGKPHDGRAPDYDDWTTESENGYKGLNGDILVWNDQLGKAFELSSMGIRVDESALRLQVGLTGDEDRLKMDWHQDLLNGKLPLTIGGGIGQSRLAMLLLRKKHIGEVQSSVWPKEMLEEFSNIL.

Belongs to the class-II aminoacyl-tRNA synthetase family. AsnA subfamily.

The protein resides in the cytoplasm. It catalyses the reaction L-aspartate + NH4(+) + ATP = L-asparagine + AMP + diphosphate + H(+). It participates in amino-acid biosynthesis; L-asparagine biosynthesis; L-asparagine from L-aspartate (ammonia route): step 1/1. The chain is Aspartate--ammonia ligase from Haemophilus influenzae (strain PittGG).